The following is a 397-amino-acid chain: GPI mannosyltransferase 1 (397 aa).

Helical transmembrane passes span 5–25 (ECLL…YGIY), 79–99 (WVHF…VMVM), 111–128 (LILA…TVST), 156–176 (GFVY…ALPI), 193–213 (LTMG…MYYI), 257–277 (WAEF…YVLW), 307–327 (YFIW…LSGA), 330–350 (IFLI…GYLL), and 362–382 (LFSA…QFIL).

Belongs to the PIGM family.

The protein localises to the endoplasmic reticulum membrane. It functions in the pathway glycolipid biosynthesis; glycosylphosphatidylinositol-anchor biosynthesis. Mannosyltransferase involved in glycosylphosphatidylinositol-anchor biosynthesis. Transfers the first alpha-1,4-mannose to GlcN-acyl-PI during GPI precursor assembly. Required for cell wall integrity. The sequence is that of GPI mannosyltransferase 1 (GPI14) from Eremothecium gossypii (strain ATCC 10895 / CBS 109.51 / FGSC 9923 / NRRL Y-1056) (Yeast).